The sequence spans 397 residues: Class V chitinase CHIT5 (397 aa).

The first 18 residues, 1-18 (MIIKLLVALIHYLHETMA), serve as a signal peptide directing secretion. Positions 54-397 (GVRAAYWPAW…SKQASNAWGY (344 aa)) constitute a GH18 domain. N-linked (GlcNAc...) asparagine glycans are attached at residues Asn-128 and Asn-147. Catalysis depends on Glu-166, which acts as the Proton donor. N-linked (GlcNAc...) asparagine glycans are attached at residues Asn-193, Asn-209, Asn-247, and Asn-261.

It belongs to the glycosyl hydrolase 18 family. Chitinase class V subfamily.

It carries out the reaction Random endo-hydrolysis of N-acetyl-beta-D-glucosaminide (1-&gt;4)-beta-linkages in chitin and chitodextrins.. The protein operates within glycan degradation; chitin degradation. Functionally, possesses chitinase activity in vitro toward glycol chitin, carboxymethyl-chitin, colloidal chitin, and the chitin oligosaccharides (N-acetylglucosamine) (GlcNAc)6 and (GlcNAc)5. Hydrolyzes (GlcNAc)6 into (GlcNAc)4 and (GlcNAc)2, or two (GlcNAc)3 molecules. Has the capacity to inhibit hyphal growth of the fungus Trichoderma viride in an agar-plate bioassay. Involved in symbiotic signaling. Required for root hair infection threads (ITs) elongation and nodule development. Possesses Nod factor (NF) hydrolase activity. NFs are lipo-chitooligosaccharide signaling molecules produced by nitrogen-fixing rhizobia to initiate nodulation (symbiosis) on the roots of legumes. Modulates NF levels and signaling to complete transition of infected nodules to functional nitrogen-fixing organs. In Lotus japonicus (Lotus corniculatus var. japonicus), this protein is Class V chitinase CHIT5.